Reading from the N-terminus, the 709-residue chain is Mucin-20 (709 aa).

An N-terminal signal peptide occupies residues 1–25 (MGCLWGLALPLFFFCWEVGVSGSSA). Residues 57 to 69 (TQTLSAETSSRAS) are compositionally biased toward polar residues. Disordered stretches follow at residues 57 to 92 (TQTL…ARET) and 170 to 403 (KGLS…WSPG). Residues 78-92 (AETRGAKRISPARET) show a composition bias toward basic and acidic residues. Low complexity-rich tracts occupy residues 173 to 182 (SSESSASSDS), 190 to 199 (SRASESSASS), 209 to 218 (SRASESSASS), 228 to 237 (SRASESSASS), 247 to 256 (SRASESSASS), 266 to 275 (SRASESSASS), 285 to 294 (SRASESSASS), 304 to 313 (SRASESSASS), 323 to 332 (SRASESSASS), 342 to 351 (SRASESSASS), 361 to 370 (SRASESSASS), and 380 to 389 (SRASESSASS). 11 tandem repeats follow at residues 173-192 (SSES…PSRA), 193-211 (SESS…PSRA), 212-230 (SESS…PSRA), 231-249 (SESS…PSRA), 250-268 (SESS…PSRA), 269-287 (SESS…PSRA), 288-306 (SESS…PSRA), 307-325 (SESS…PSRA), 326-344 (SESS…PSRA), 345-363 (SESS…PSRA), and 364-382 (SESS…PSRA). A 12 X 20 AA approximate tandem repeats of S-S-E-S-S-A-S-S-D-S-P-H-P-V-I-T-P-S-R-A region spans residues 173 to 400 (SSESSASSDS…GPHPVITPSW (228 aa)). A 12; approximate repeat occupies 383 to 400 (SESSASSDGPHPVITPSW). N423 carries N-linked (GlcNAc...) asparagine glycosylation. Disordered regions lie at residues 434–515 (SSIP…APGA) and 583–657 (NFTP…VSAG). The tract at residues 450–656 (VKASSTSDPP…RTRPTTDVSA (207 aa)) is involved in oligomerization. A compositionally biased stretch (polar residues) spans 474-489 (VTASAETLSTAGTTES). The segment covering 613–652 (TTTNSSRGTNSTLAKITTSAKTTMKPPTATPTTARTRPTT) has biased composition (low complexity). N616 and N622 each carry an N-linked (GlcNAc...) asparagine glycan. The tract at residues 657-709 (GENGGFLLLRLSVASPEDLTDPRVAERLMQQLHRELHAHAPHFQVSLLRVRRG) is interaction with MET.

Interacts with MET; oligomerization increases affinity for MET. Highly expressed in kidney, moderately in placenta, lung, prostate, liver, and digestive system. In the kidney, localized in the proximal tubules but not in the glomerulus or distal tubules. Detected in most of the male urogenital tract epithelia, with the exception of epididymis.

The protein localises to the secreted. It is found in the apical cell membrane. Its subcellular location is the basolateral cell membrane. The protein resides in the cell projection. It localises to the microvillus membrane. Its function is as follows. May regulate MET signaling cascade. Seems to decrease hepatocyte growth factor (HGF)-induced transient MAPK activation. Blocks GRB2 recruitment to MET thus suppressing the GRB2-RAS pathway. Inhibits HGF-induced proliferation of MMP1 and MMP9 expression. This is Mucin-20 (MUC20) from Homo sapiens (Human).